Here is a 223-residue protein sequence, read N- to C-terminus: Neurotrophic factor BDNF precursor form (223 aa).

The N-terminal stretch at 1-5 is a signal peptide; that stretch reads SCMKA. Positions 6-114 are excised as a propeptide; that stretch reads APMKEVSIRG…AANMSMRVRR (109 aa). A glycan (N-linked (GlcNAc...) asparagine) is linked at Asn107. Cystine bridges form between Cys127/Cys194 and Cys172/Cys223.

It belongs to the NGF-beta family.

The protein resides in the secreted. In terms of biological role, promotes the survival of neuronal populations that are all located either in the central nervous system or directly connected to it. The protein is Neurotrophic factor BDNF precursor form (BDNF) of Exiliboa placata (Oaxacan dwarf boa).